We begin with the raw amino-acid sequence, 353 residues long: Chloroplastic lipocalin (353 aa).

Residues 1–18 show a composition bias toward low complexity; it reads MILLSSSISLSRPVSSQS. The disordered stretch occupies residues 1 to 27; it reads MILLSSSISLSRPVSSQSFSPPAATST. A chloroplast-targeting transit peptide spans 1 to 39; the sequence is MILLSSSISLSRPVSSQSFSPPAATSTRRSHSSVTVKCC. Cysteines 163 and 299 form a disulfide.

Belongs to the calycin superfamily. Lipocalin family. In terms of tissue distribution, expressed in leaves at low levels (at protein levels). Present in seeds.

Its subcellular location is the plastid. It is found in the chloroplast thylakoid lumen. Lipocalin that prevents thylakoidal membrane lipids peroxidation and confers protection against oxidative stress, especially mediated by singlet oxygen in response to high light and other stress (e.g. heat shocks). Required for seed longevity by ensuring polyunsaturated lipids integrity. This Arabidopsis thaliana (Mouse-ear cress) protein is Chloroplastic lipocalin.